Here is a 534-residue protein sequence, read N- to C-terminus: tRNA uridine(34) acetyltransferase (534 aa).

The segment at Lys70–Glu330 is radical S-adenosyl-L-methionine (rSAM). One can recognise a Radical SAM core domain in the interval Arg73–Lys344. [4Fe-4S] cluster contacts are provided by Cys90, Cys95, and Cys98. Lys150 serves as a coordination point for acetyl-CoA. Cys384 and Cys389 are oxidised to a cystine. The N-acetyltransferase domain maps to Ile387–Leu534. Acetyl-CoA is bound by residues Gln461–Val464, Tyr485–Arg487, and Tyr518.

Belongs to the ELP3 family. [4Fe-4S] cluster serves as cofactor.

The catalysed reaction is uridine(34) in tRNA + acetyl-CoA + S-adenosyl-L-methionine + H2O = 5-(carboxymethyl)uridine(34) in tRNA + 5'-deoxyadenosine + L-methionine + CoA + 2 H(+). It participates in tRNA modification. Its function is as follows. tRNA uridine(34) acetyltransferase, which mediates formation of carboxymethyluridine in the wobble base at position 34 in tRNAs. The proposed mechanism is the following: (i) recruits S-adenosyl-L-methionine and cleaves it to generate a 5'-deoxyadenosine radical (5'-dA) in the radical S-adenosyl-L-methionine (rSAM) region, (ii) hydrolyzes acetyl-CoA in the N-acetyltransferase domain and (iii) an acetyl radical is formed by the products of the two domains and (iv) is transferred onto the C5 position of uridine(34) in the bound tRNA molecule. Does not show protein lysine acetyltransferase activity. This is tRNA uridine(34) acetyltransferase from Methanocaldococcus infernus (strain DSM 11812 / JCM 15783 / ME).